Reading from the N-terminus, the 573-residue chain is Putative inorganic phosphate transporter C1683.01 (573 aa).

6 helical membrane-spanning segments follow: residues 48–68, 100–120, 124–144, 154–174, 194–214, and 230–250; these read MMLA…INLV, AASN…GDFF, FVYG…IAMP, MMWV…DYPM, LIFA…IILL, and LEGV…GVLI. Polar residues predominate over residues 261–270; it reads FKNSQQLNSG. Disordered stretches follow at residues 261–280 and 290–312; these read FKNS…TSLN and PSVT…RSNT. 6 helical membrane passes run 348–368, 397–417, 422–442, 451–471, 487–507, and 510–530; these read HLLG…GVNL, LIIA…LVEI, WIQL…AGRW, FACF…TTFI, GISA…FNFL, and IIGY…GILF.

It belongs to the major facilitator superfamily. Sugar transporter (TC 2.A.1.1) family.

The protein resides in the endoplasmic reticulum membrane. Functionally, high-affinity transporter for external inorganic phosphate. This Schizosaccharomyces pombe (strain 972 / ATCC 24843) (Fission yeast) protein is Putative inorganic phosphate transporter C1683.01.